Here is a 397-residue protein sequence, read N- to C-terminus: Acetate kinase (397 aa).

Asn-7 is a binding site for Mg(2+). Position 14 (Lys-14) interacts with ATP. Arg-91 contributes to the substrate binding site. Asp-148 acts as the Proton donor/acceptor in catalysis. ATP-binding positions include 208–212 (HIGNG), 283–285 (DMR), and 331–335 (GVGEN). Glu-384 contacts Mg(2+).

This sequence belongs to the acetokinase family. In terms of assembly, homodimer. Mg(2+) serves as cofactor. The cofactor is Mn(2+).

It localises to the cytoplasm. It carries out the reaction acetate + ATP = acetyl phosphate + ADP. Its pathway is metabolic intermediate biosynthesis; acetyl-CoA biosynthesis; acetyl-CoA from acetate: step 1/2. Its function is as follows. Catalyzes the formation of acetyl phosphate from acetate and ATP. Can also catalyze the reverse reaction. The polypeptide is Acetate kinase (Azobacteroides pseudotrichonymphae genomovar. CFP2).